A 365-amino-acid chain; its full sequence is DNA replication and repair protein RecF (365 aa).

Gly-30–Thr-37 is an ATP binding site.

It belongs to the RecF family.

The protein resides in the cytoplasm. Functionally, the RecF protein is involved in DNA metabolism; it is required for DNA replication and normal SOS inducibility. RecF binds preferentially to single-stranded, linear DNA. It also seems to bind ATP. In Shewanella halifaxensis (strain HAW-EB4), this protein is DNA replication and repair protein RecF.